Here is a 389-residue protein sequence, read N- to C-terminus: MKNLRKFPLVNLFNNYMIDAPEPSNINYFWNFGSLLATVLGIQILSGIFLAMFYTPHFDLAFLSVEHIMREVNYGWLIRYMHATGASFFFAFLYLHIARGLFYGSYRRPRTLTWTIGTAIFFLTILTAFLGYTLPNSQTSYWGATVITNLVSSIPFIGHDLVEFLWGGFNVNNATLNRFFSLHYLLPFIISALAIMHMIALHTNGSSNPLGITGNLDRIPMSPHYLIKDLVTIFLFFIIFSIIIFYFPTILSDADNAVPADPMKTPMSIVPEWYLLPFYAILRSIPNKLFGVIAMFFAIFILFFLPLLDFNYIRGNKFQPIGKLLFWCFISNFILLMFIGAKHVEIPYVAIGTYATLFYFAYFVFFIPLSSLISNTLLDLNQKSNSITK.

A run of 4 helical transmembrane segments spans residues 32–52 (FGSL…FLAM), 76–98 (WLIR…LHIA), 113–133 (TWTI…LGYT), and 179–199 (FFSL…MHMI). Heme b is bound by residues histidine 82 and histidine 96. Positions 183 and 197 each coordinate heme b. Histidine 202 provides a ligand contact to a ubiquinone. Transmembrane regions (helical) follow at residues 225-245 (YLIK…IIIF), 289-309 (LFGV…PLLD), 321-341 (IGKL…FIGA), and 348-368 (YVAI…FFIP).

This sequence belongs to the cytochrome b family. Fungal cytochrome b-c1 complex contains 10 subunits; 3 respiratory subunits, 2 core proteins and 5 low-molecular weight proteins. Cytochrome b-c1 complex is a homodimer. Requires heme b as cofactor.

It is found in the mitochondrion inner membrane. Functionally, component of the ubiquinol-cytochrome c reductase complex (complex III or cytochrome b-c1 complex) that is part of the mitochondrial respiratory chain. The b-c1 complex mediates electron transfer from ubiquinol to cytochrome c. Contributes to the generation of a proton gradient across the mitochondrial membrane that is then used for ATP synthesis. This Schizosaccharomyces japonicus (Fission yeast) protein is Cytochrome b (cob).